The following is a 731-amino-acid chain: Actin filament-associated protein 1 (731 aa).

The residue at position 1 (M1) is an N-acetylmethionine. The segment at 46–90 is disordered; that stretch reads VKDHAQKAETNNLPAPPQMPLPEIPQPWLPPDSGPPPLPTSSLPE. A compositionally biased stretch (pro residues) spans 59 to 84; it reads PAPPQMPLPEIPQPWLPPDSGPPPLP. Positions 70-73 match the SH3-binding motif; that stretch reads PQPW. The SH2-binding 1 signature appears at 93–96; it reads YEEA. The tract at residues 118–138 is disordered; it reads GSSYESYDEEEEDGKGKKTQH. The 97-residue stretch at 152–248 folds into the PH 1 domain; it reads DAKICAFLLR…WLKVIKEAYS (97 aa). Positions 252 to 318 are disordered; that stretch reads GPVDPECSPP…SKSEAKGTVS (67 aa). Positions 271 to 284 are enriched in basic and acidic residues; the sequence is AELEKKLSSERPSS. 2 positions are modified to phosphoserine: S283 and S284. Residues 348 to 442 form the PH 2 domain; sequence DVPTCGYLNV…WIGILLAETG (95 aa). An SH2-binding 2 motif is present at residues 452 to 457; sequence YDYIDV. Positions 511 to 550 are disordered; that stretch reads SLKNKKPPASSNGLPVKGRAPSSQQKKVESAGGVKRTASN. S549 is subject to Phosphoserine. A coiled-coil region spans residues 558–649; it reads KNRVEADAKR…VKESLKKALA (92 aa). Residues 595 to 638 are interaction with F-actin; sequence DLRAAIEVNAGRKTQVALEDKLKRLEEECKQREAERVSLELELT. The disordered stretch occupies residues 657–731; sequence AIEPKSGTSS…AREWELKNGT (75 aa). A phosphoserine mark is found at S665, S666, and S669. Position 676 is a phosphothreonine (T676). Polar residues predominate over residues 678-687; the sequence is ENSPISSCDT. Residues S680 and S688 each carry the phosphoserine modification. The segment covering 721 to 731 has biased composition (basic and acidic residues); the sequence is KAREWELKNGT.

Monomer and homomultimer. Interacts via its C-terminus with F-actin; probably involving AFAP1 multimers. Interacts with activated SRC SH3-SH2 domains. Interacts via its PH 1 domain with PRKCA, PRKCB and PRKCI. Phosphorylated on tyrosine residues. Widely expressed with highest levels in brain.

Its subcellular location is the cytoplasm. It is found in the cytoskeleton. It localises to the stress fiber. Can cross-link actin filaments into both network and bundle structures. May modulate changes in actin filament integrity and induce lamellipodia formation. May function as an adapter molecule that links other proteins, such as SRC and PKC to the actin cytoskeleton. The chain is Actin filament-associated protein 1 (Afap1) from Rattus norvegicus (Rat).